The sequence spans 197 residues: ATP-dependent Clp protease proteolytic subunit (197 aa).

Catalysis depends on Ser101, which acts as the Nucleophile. The active site involves His126.

Belongs to the peptidase S14 family. Component of the chloroplastic Clp protease core complex.

It localises to the plastid. Its subcellular location is the chloroplast stroma. The enzyme catalyses Hydrolysis of proteins to small peptides in the presence of ATP and magnesium. alpha-casein is the usual test substrate. In the absence of ATP, only oligopeptides shorter than five residues are hydrolyzed (such as succinyl-Leu-Tyr-|-NHMec, and Leu-Tyr-Leu-|-Tyr-Trp, in which cleavage of the -Tyr-|-Leu- and -Tyr-|-Trp bonds also occurs).. Functionally, cleaves peptides in various proteins in a process that requires ATP hydrolysis. Has a chymotrypsin-like activity. Plays a major role in the degradation of misfolded proteins. This chain is ATP-dependent Clp protease proteolytic subunit, found in Daucus carota (Wild carrot).